A 278-amino-acid chain; its full sequence is Large ribosomal subunit protein uL2 (278 aa).

The segment at 225 to 278 (MNPVDHPHGGGEGRTSGGRHPVTPWGKPTKGKKTRANKATDKYIVRSRHQKKKG) is disordered. The segment covering 269 to 278 (VRSRHQKKKG) has biased composition (basic residues).

The protein belongs to the universal ribosomal protein uL2 family. As to quaternary structure, part of the 50S ribosomal subunit. Forms a bridge to the 30S subunit in the 70S ribosome.

In terms of biological role, one of the primary rRNA binding proteins. Required for association of the 30S and 50S subunits to form the 70S ribosome, for tRNA binding and peptide bond formation. It has been suggested to have peptidyltransferase activity; this is somewhat controversial. Makes several contacts with the 16S rRNA in the 70S ribosome. The chain is Large ribosomal subunit protein uL2 from Parvibaculum lavamentivorans (strain DS-1 / DSM 13023 / NCIMB 13966).